Reading from the N-terminus, the 342-residue chain is Cell division protein FtsQ (342 aa).

At 1 to 80 (MDGAGSLTRS…ALVERYLPRR (80 aa)) the chain is on the cytoplasmic side. A helical transmembrane segment spans residues 81-99 (VGISMTVLLLIGSCGFGIV). Topologically, residues 100-342 (KGGHLQDFVT…KKKKKAGDAA (243 aa)) are periplasmic. The 69-residue stretch at 124–192 (FRITSVVING…GQLMIELTER (69 aa)) folds into the POTRA domain.

This sequence belongs to the FtsQ/DivIB family. FtsQ subfamily.

Its subcellular location is the cell inner membrane. Its function is as follows. Essential cell division protein. In Bradyrhizobium diazoefficiens (strain JCM 10833 / BCRC 13528 / IAM 13628 / NBRC 14792 / USDA 110), this protein is Cell division protein FtsQ.